Reading from the N-terminus, the 142-residue chain is Large ribosomal subunit protein uL13 (142 aa).

This sequence belongs to the universal ribosomal protein uL13 family. In terms of assembly, part of the 50S ribosomal subunit.

Functionally, this protein is one of the early assembly proteins of the 50S ribosomal subunit, although it is not seen to bind rRNA by itself. It is important during the early stages of 50S assembly. The polypeptide is Large ribosomal subunit protein uL13 (Pseudomonas syringae pv. tomato (strain ATCC BAA-871 / DC3000)).